A 735-amino-acid polypeptide reads, in one-letter code: Zinc finger CCCH domain-containing protein 14 (735 aa).

An N-acetylmethionine modification is found at Met-1. Residues 78-153 are disordered; the sequence is TEPSSLKSPD…RHSYDDGAST (76 aa). The residue at position 85 (Ser-85) is a Phosphoserine. Glycyl lysine isopeptide (Lys-Gly) (interchain with G-Cter in SUMO2) cross-links involve residues Lys-99, Lys-139, Lys-175, and Lys-198. A compositionally biased stretch (polar residues) spans 131-144; that stretch reads VSTSSQEQKSTNVR. Ser-240 is modified (phosphoserine). Glycyl lysine isopeptide (Lys-Gly) (interchain with G-Cter in SUMO2) cross-links involve residues Lys-245, Lys-283, and Lys-295. Residues 308–351 form a disordered region; the sequence is FSHDGEEEEEDEDYGTRIGSLSSSVSVPAKPERRPSLPPSKQAN. 3 positions are modified to phosphoserine: Ser-309, Ser-327, and Ser-343. Lys-357 bears the N6-acetyllysine; alternate mark. A Glycyl lysine isopeptide (Lys-Gly) (interchain with G-Cter in SUMO2); alternate cross-link involves residue Lys-357. Lys-378 participates in a covalent cross-link: Glycyl lysine isopeptide (Lys-Gly) (interchain with G-Cter in SUMO2). Phosphoserine occurs at positions 390 and 409. The disordered stretch occupies residues 399 to 431; sequence VQGQNRAPRISPPVKEEEAKGDNTGKSQGTQQR. The span at 412–421 shows a compositional bias: basic and acidic residues; that stretch reads VKEEEAKGDN. A Glycyl lysine isopeptide (Lys-Gly) (interchain with G-Cter in SUMO2) cross-link involves residue Lys-413. A compositionally biased stretch (polar residues) spans 422–431; it reads TGKSQGTQQR. Lys-489 is covalently cross-linked (Glycyl lysine isopeptide (Lys-Gly) (interchain with G-Cter in SUMO2)). 4 positions are modified to phosphoserine: Ser-498, Ser-515, Ser-527, and Ser-620. C3H1-type zinc fingers lie at residues 595–620, 621–640, 641–656, 681–698, and 700–718; these read EKLL…HPIS, PCKA…VHPN, CKYD…PFTH, CRYF…YHPK, and CRFN…HPTI.

Belongs to the ZC3H14 family. Homodimer; facilitating circular RNAs (circRNAs) formation. Associates with the spliceosome. Interacts with HOOK2. Interacts with ZFC3H1 in a RNase-sensitive manner. Expressed in hippocampal pyramidal neurons (at protein level). Expressed in kidney, liver, muscle, heart brain and testes. Expressed in hippocampal pyramidal neurons.

The protein localises to the nucleus speckle. RNA-binding protein involved in the biogenesis of circular RNAs (circRNAs), which are produced by back-splicing circularization of pre-mRNAs. Acts by binding to both exon-intron boundary and 3'-UTR of pre-mRNAs to promote circRNA biogenesis through dimerization and the association with the spliceosome. Required for spermatogenesis via involvement in circRNA biogenesis. Regulates the pre-mRNA processing of ATP5MC1; preventing its degradation. Also binds the poly(A) tail of mRNAs; controlling poly(A) length in neuronal cells. The sequence is that of Zinc finger CCCH domain-containing protein 14 from Mus musculus (Mouse).